Reading from the N-terminus, the 95-residue chain is Nickel-cobalt-cadmium resistance protein NccY (95 aa).

To A.eutrophus CnrY.

Its function is as follows. Component of the NCC cation-efflux system that confers resistance to nickel, cobalt and cadmium. May be involved in the regulation of NCC. The chain is Nickel-cobalt-cadmium resistance protein NccY (nccY) from Alcaligenes xylosoxydans xylosoxydans (Achromobacter xylosoxidans).